Consider the following 178-residue polypeptide: dCTP deaminase (178 aa).

DCTP contacts are provided by residues 99 to 104 and aspartate 115; that span reads RSTWAR. Glutamate 125 functions as the Proton donor/acceptor in the catalytic mechanism. Positions 157 and 164 each coordinate dCTP.

The protein belongs to the dCTP deaminase family. Homotrimer.

It catalyses the reaction dCTP + H2O + H(+) = dUTP + NH4(+). It functions in the pathway pyrimidine metabolism; dUMP biosynthesis; dUMP from dCTP (dUTP route): step 1/2. Catalyzes the deamination of dCTP to dUTP. This is dCTP deaminase from Aeropyrum pernix (strain ATCC 700893 / DSM 11879 / JCM 9820 / NBRC 100138 / K1).